A 544-amino-acid polypeptide reads, in one-letter code: MAKQIVFNEEARRALERGVNALAESVRVTLGPKGRNVVLDKKFGAPLITNDGVTIAREIELEDPFENMGAQLVKEVATKTNDVAGDGTTTATVLAQAIIREGLKNVAAGANPMGIKRGIEKAVESVVEDIKTNAKPIESKESIAQVASISAGDDNIGVLISDAMEKVGKDGVITVEEAKGMTTELKVVEGMQFDRGYLSAYMITDTDKMEAILNDPYILITDKKIGAIADILPVLEKVVQAGRQLLIIAEDIEGEALATLILNKLRGTFTCVAVKAPGFGDRRKAMLEDIAILTGGTVITEDLGLKLENTTIDMLGRARQIRVTKEETTIVEGSGSQDDIKSRVEAIKKQIDETTSDFDREKLQERLAKLAGGVAVIQVGAATEVEMKEKKLRIEDALAATRAAVEEGIVAGGGCALVDAAKALDSLKLTGDEKTGVAIVCRALEEPLRQIANNAGFEGSIVVEKVRNGGRGVGFNALTEAYEDMIAAGIVDPAKVTRSALQNAASIAAMLLTTECLVSDIPSKDNGAAAMAGMGGMGGMGGMM.

Residues 29–32 (TLGP), 86–90 (DGTTT), G413, 476–478 (NAL), and D492 each bind ATP.

It belongs to the chaperonin (HSP60) family. Forms a cylinder of 14 subunits composed of two heptameric rings stacked back-to-back. Interacts with the co-chaperonin GroES.

Its subcellular location is the cytoplasm. It carries out the reaction ATP + H2O + a folded polypeptide = ADP + phosphate + an unfolded polypeptide.. Functionally, together with its co-chaperonin GroES, plays an essential role in assisting protein folding. The GroEL-GroES system forms a nano-cage that allows encapsulation of the non-native substrate proteins and provides a physical environment optimized to promote and accelerate protein folding. The polypeptide is Chaperonin GroEL (Desulfitobacterium hafniense (strain DSM 10664 / DCB-2)).